Consider the following 237-residue polypeptide: Phosphoribosylaminoimidazole-succinocarboxamide synthase (237 aa).

Belongs to the SAICAR synthetase family.

It catalyses the reaction 5-amino-1-(5-phospho-D-ribosyl)imidazole-4-carboxylate + L-aspartate + ATP = (2S)-2-[5-amino-1-(5-phospho-beta-D-ribosyl)imidazole-4-carboxamido]succinate + ADP + phosphate + 2 H(+). It functions in the pathway purine metabolism; IMP biosynthesis via de novo pathway; 5-amino-1-(5-phospho-D-ribosyl)imidazole-4-carboxamide from 5-amino-1-(5-phospho-D-ribosyl)imidazole-4-carboxylate: step 1/2. The polypeptide is Phosphoribosylaminoimidazole-succinocarboxamide synthase (Sodalis glossinidius (strain morsitans)).